The primary structure comprises 293 residues: Hydroxyquinol 1,2-dioxygenase (293 aa).

Fe cation contacts are provided by Y164, Y197, H221, and H223.

This sequence belongs to the intradiol ring-cleavage dioxygenase family. Homodimer. Fe(3+) serves as cofactor.

It carries out the reaction benzene-1,2,4-triol + O2 = maleylacetate + 2 H(+). The protein operates within aromatic compound metabolism; beta-ketoadipate pathway; 3-oxoadipate from 3,4-dihydroxybenzoate: step 2/4. Its activity is regulated as follows. Inhibited by 3,5-dichlorocatechol, chlorohydroquinone and 4,5-dibromocatechol. Catalyzes the ortho-cleavage of the aromatic ring of hydroxyquinol. The chain is Hydroxyquinol 1,2-dioxygenase (chqB) from Nocardioides simplex (Arthrobacter simplex).